A 49-amino-acid polypeptide reads, in one-letter code: MASHKVSLACTVCGSRNYTVTLSKDRTERLSVSKFCQHCGKHTLHQQTK.

It belongs to the bacterial ribosomal protein bL33 family.

The protein is Large ribosomal subunit protein bL33A of Leuconostoc mesenteroides subsp. mesenteroides (strain ATCC 8293 / DSM 20343 / BCRC 11652 / CCM 1803 / JCM 6124 / NCDO 523 / NBRC 100496 / NCIMB 8023 / NCTC 12954 / NRRL B-1118 / 37Y).